The primary structure comprises 402 residues: Phosphoglycerate kinase (402 aa).

Residues 24-26 (DFN), R40, 63-66 (HFGR), R122, and R155 each bind substrate. ATP is bound by residues K206, G297, E328, and 357–360 (GGDS).

The protein belongs to the phosphoglycerate kinase family. Monomer.

It localises to the cytoplasm. The catalysed reaction is (2R)-3-phosphoglycerate + ATP = (2R)-3-phospho-glyceroyl phosphate + ADP. The protein operates within carbohydrate degradation; glycolysis; pyruvate from D-glyceraldehyde 3-phosphate: step 2/5. The chain is Phosphoglycerate kinase from Synechococcus sp. (strain ATCC 27144 / PCC 6301 / SAUG 1402/1) (Anacystis nidulans).